Consider the following 280-residue polypeptide: Undecaprenyl-diphosphatase (280 aa).

Helical transmembrane passes span 1–21, 41–61, 87–107, 115–135, 147–167, 186–206, 226–246, and 260–280; these read MTIL…FLPV, FVRA…LVLY, FDLY…GFLF, LGSV…MLFV, ITYP…FLPG, KAAA…ATLL, VLLV…KFFI, and YRIL…SLAV.

The protein belongs to the UppP family.

It is found in the cell inner membrane. The catalysed reaction is di-trans,octa-cis-undecaprenyl diphosphate + H2O = di-trans,octa-cis-undecaprenyl phosphate + phosphate + H(+). In terms of biological role, catalyzes the dephosphorylation of undecaprenyl diphosphate (UPP). Confers resistance to bacitracin. The sequence is that of Undecaprenyl-diphosphatase from Porphyromonas gingivalis (strain ATCC BAA-308 / W83).